Reading from the N-terminus, the 254-residue chain is Probable 2,4-dienoyl-CoA reductase [(2E)-enoyl-CoA-producing] (254 aa).

6–38 (VIITGGSSGMGKAMAKKQAELGWHVMVTGRNHE) serves as a coordination point for NADP(+). A substrate-binding site is contributed by Thr-100. Tyr-142 serves as the catalytic Proton acceptor. Lys-157 is an NAD(+) binding site.

It belongs to the short-chain dehydrogenases/reductases (SDR) family. 2,4-dienoyl-CoA reductase subfamily.

The catalysed reaction is a 4,5-saturated-(2E)-enoyl-CoA + NADP(+) = a (2E,4E)-dienoyl-CoA + NADPH + H(+). The enzyme catalyses a (2E,4Z)-dienoyl-CoA + NADPH + H(+) = a 4,5-saturated-(2E)-enoyl-CoA + NADP(+). It functions in the pathway lipid metabolism; fatty acid beta-oxidation. In terms of biological role, auxiliary enzyme of beta-oxidation. It participates in the metabolism of unsaturated fatty enoyl-CoA esters having double bonds in both even- and odd-numbered positions. Catalyzes the NADP-dependent reduction of 2,4-dienoyl-CoA to yield trans-3-enoyl-CoA. This is Probable 2,4-dienoyl-CoA reductase [(2E)-enoyl-CoA-producing] (fadH) from Bacillus subtilis (strain 168).